The sequence spans 354 residues: Probable butyrate kinase (354 aa).

Belongs to the acetokinase family.

Its subcellular location is the cytoplasm. It catalyses the reaction butanoate + ATP = butanoyl phosphate + ADP. This is Probable butyrate kinase from Phocaeicola vulgatus (strain ATCC 8482 / DSM 1447 / JCM 5826 / CCUG 4940 / NBRC 14291 / NCTC 11154) (Bacteroides vulgatus).